We begin with the raw amino-acid sequence, 500 residues long: MELTVEPIDIGTERPVVLLNCADAETLGVHSLDRVEIDWDGTTEVGIVKVTDELVAAGRIGASHGFPEITDGTVVAVTPAGQPESVESIRRKLDGRELDSDELGAIVADIEADRLSDLELSAYVCASHANGLSLEETKQLTERMAEVGKQLSWEQPVVADKHSIGGVAGNRVTPVVVAIVAAAGLTIPKTSSRAVTSPAGTADTMEVFCPVEFSREEIRDIVTETGGCLVWGGAVDLSPVDDKVIRAQRPLSLDPPGQVIASVLSKKQSAGSSHIVVDIPYGAGAKVTSLSEARDLADDFRRVGDHLGLTIECALTRGSDPIGHGIGPVLEARDVLAVLEGEGPEPLRIKSLRLADIIFDMAREAGMPVDDRSAADILDSGAALSKFRDIVAVQGGDPDVSRDDLQPGDRTETVTADTDGLVVDVDNQAVSQLARRAGAPNDHGAGVVIHRRTGDKAVAGDVLYTIHAESSDRLEAAREYAAGDEIVRVGGRDEALVERR.

Residues glycine 166, serine 192–serine 197, and threonine 201 contribute to the AMP site. The active-site Proton donor is aspartate 254. AMP is bound by residues serine 262 and lysine 286.

This sequence belongs to the thymidine/pyrimidine-nucleoside phosphorylase family. Type 2 subfamily.

The catalysed reaction is AMP + phosphate = alpha-D-ribose 1,5-bisphosphate + adenine. The enzyme catalyses CMP + phosphate = cytosine + alpha-D-ribose 1,5-bisphosphate. It carries out the reaction UMP + phosphate = alpha-D-ribose 1,5-bisphosphate + uracil. Its function is as follows. Catalyzes the conversion of AMP and phosphate to adenine and ribose 1,5-bisphosphate (R15P). Exhibits phosphorylase activity toward CMP and UMP in addition to AMP. Functions in an archaeal AMP degradation pathway, together with R15P isomerase and RubisCO. This chain is AMP phosphorylase (deoA), found in Natronomonas pharaonis (strain ATCC 35678 / DSM 2160 / CIP 103997 / JCM 8858 / NBRC 14720 / NCIMB 2260 / Gabara) (Halobacterium pharaonis).